The sequence spans 494 residues: Alpha-amylase-related protein (494 aa).

The first 20 residues, 1–20 (MIKFALALTLCLAGASLSLA), serve as a signal peptide directing secretion. Residue Gln-21 is modified to Pyrrolidone carboxylic acid. Cys-48 and Cys-104 are joined by a disulfide. Ca(2+) contacts are provided by Asn-118, Gln-169, and Asp-178. Cys-157 and Cys-171 form a disulfide bridge. A chloride-binding site is contributed by Arg-206. Catalysis depends on Asp-208, which acts as the Nucleophile. His-212 contacts Ca(2+). Glu-245 functions as the Proton donor in the catalytic mechanism. Chloride-binding residues include Asn-308 and Arg-343. Disulfide bonds link Cys-376–Cys-382, Cys-418–Cys-441, and Cys-448–Cys-460.

It belongs to the glycosyl hydrolase 13 family. In terms of assembly, monomer. Ca(2+) serves as cofactor. Requires chloride as cofactor.

The protein resides in the secreted. It carries out the reaction Endohydrolysis of (1-&gt;4)-alpha-D-glucosidic linkages in polysaccharides containing three or more (1-&gt;4)-alpha-linked D-glucose units.. The polypeptide is Alpha-amylase-related protein (Amyrel) (Drosophila lini (Fruit fly)).